A 695-amino-acid chain; its full sequence is MSRLSQLLNSKKAKQKPPSEHPIGLSSILKQDSSSSSDSPNFFPSSSTNDHQERDTINDTNFVVPEKQKTSKLALLAAERKKLHSSFPSTQQQPPKTEKEKEKEPIQAKHKKNVENDFLLQRFRKVRIAEKKDSEQPSSHEIHLTDDDDKTTLQKQMVESDQLKKNPQEVKLAPPSSFAKCLTGAKKRVFEDQIEIHLSKSSLLGFNAPSPDDIVLMAQSKSKSFQKHKRLDEQLLNSVKSMKKVSQQLKPQKNTNDSNNDHTLLSQDQLIELSKLVKPRTKLLLLGPPKSGKKTLLSRLFFQIGSFDPKTMQKCTVLNAKKESLSSVLKSTKTKWYDFETFSNSYSSTIIDFPLGIFTTNASSRDNFLKHSSLFQVMNTAIFTIDCLNPLEGLDGISSILQLMNGLSISSYMFAITKMDEIEWDENKFINLVNSIQSFLKESCGIIEKSKFIPISGLKGTNLTSISQEKLSQWYKSDTLLGKIDKEADTNHGTWNFLLNLPLSLTISHITPLPENQSHIYCSIHSGMLQDSQKLYVGTGRLETQITGLSSDENPKGFNVAGDMIQAKIPTLPNLCPGILIADSIDAFTSSKTAYVNATWFHGSLEKGKSMHVIALFGCHAVLTKLYCFTDSQEKAPNAIGNDLERNRTSLVKIELENAFPLVKESYINTLSRVLFVSEKWNSLIAFGTVLSLHD.

2 disordered regions span residues 1-112 (MSRL…KHKK) and 242-262 (MKKVSQQLKPQKNTNDSNNDH). Residues 32-47 (DSSSSSDSPNFFPSSS) show a composition bias toward low complexity. Positions 96 to 107 (KTEKEKEKEPIQ) are enriched in basic and acidic residues. The 215-residue stretch at 278–492 (KPRTKLLLLG…KIDKEADTNH (215 aa)) folds into the tr-type G domain. GTP is bound by residues 287 to 294 (GPPKSGKK), 357 to 361 (IFTTN), and 417 to 420 (TKMD).

It belongs to the TRAFAC class translation factor GTPase superfamily. Classic translation factor GTPase family.

It is found in the cytoplasm. It localises to the nucleus. This is an uncharacterized protein from Schizosaccharomyces pombe (strain 972 / ATCC 24843) (Fission yeast).